Consider the following 575-residue polypeptide: Chaperonin 60 subunit alpha 2, chloroplastic (575 aa).

Residues 1–18 (MFAVSPSSFSPTTISPRR) are compositionally biased toward low complexity. Positions 1-27 (MFAVSPSSFSPTTISPRRSGQRNEPRK) are disordered. The transit peptide at 1-32 (MFAVSPSSFSPTTISPRRSGQRNEPRKFSVVR) directs the protein to the chloroplast.

Belongs to the chaperonin (HSP60) family. Part of the Cpn60 complex composed of 7 alpha and 7 beta subunits.

It is found in the plastid. The protein localises to the chloroplast. Its function is as follows. Involved in protein assisted folding. The polypeptide is Chaperonin 60 subunit alpha 2, chloroplastic (CPN60A2) (Arabidopsis thaliana (Mouse-ear cress)).